The following is a 75-amino-acid chain: Small capsomere-interacting protein (75 aa).

This sequence belongs to the herpesviridae small capsomere-interacting protein family. As to quaternary structure, interacts with the major capsid protein/MCP.

The protein resides in the virion. It is found in the host nucleus. Functionally, participates in the assembly of the infectious particles by decorating the outer surface of the capsid shell and thus forming a layer between the capsid and the tegument. Complexes composed of the major capsid protein and small capsomere-interacting protein/SCP assemble together in the host cytoplasm and are translocated to the nucleus, where they accumulate and participate in capsid assembly. In Homo sapiens (Human), this protein is Small capsomere-interacting protein.